Consider the following 291-residue polypeptide: Beta-lactamase CTX-M-1 (291 aa).

The N-terminal stretch at methionine 1–alanine 28 is a signal peptide. Serine 73 (nucleophile; acyl-ester intermediate) is an active-site residue. A beta-lactam is bound by residues lysine 76, serine 133, glutamate 169, and serine 240. The active-site Proton acceptor is glutamate 169.

Belongs to the class-A beta-lactamase family. In terms of assembly, monomer.

The protein localises to the secreted. It carries out the reaction a beta-lactam + H2O = a substituted beta-amino acid. Inhibited by the beta-lactamase-blocking agent clavulanic acid; in the TG1 strain. Extended-spectrum beta-lactamase (ESBL) which confers resistance to penicillins, as well as first, second and third-generation cephalosporins. Has cefotaxime-hydrolyzing activity. Inactive against the cephamycin antibiotic, cefoxitin, or against the carbapenem, imipenem. This chain is Beta-lactamase CTX-M-1, found in Escherichia coli.